Consider the following 364-residue polypeptide: DNA replication and repair protein RecF (364 aa).

Position 30-37 (30-37 (GNNAQGKT)) interacts with ATP.

This sequence belongs to the RecF family.

The protein resides in the cytoplasm. Functionally, the RecF protein is involved in DNA metabolism; it is required for DNA replication and normal SOS inducibility. RecF binds preferentially to single-stranded, linear DNA. It also seems to bind ATP. The sequence is that of DNA replication and repair protein RecF from Clostridium botulinum (strain ATCC 19397 / Type A).